The following is a 623-amino-acid chain: Heterogeneous nuclear ribonucleoprotein L (623 aa).

A compositionally biased stretch (basic residues) spans 1–16 (MSRRLLPRAEKRRRRL). Positions 1–97 (MSRRLLPRAE…NYDDPHKTPA (97 aa)) are disordered. Positions 17 to 27 (EQRQQPDEQLR) are enriched in basic and acidic residues. The span at 28–37 (RAGAMVKMAA) shows a compositional bias: low complexity. Residues 38–54 (AGGGGGGGRYYGGGNEG) are compositionally biased toward gly residues. Residues Lys-59 and Lys-62 each participate in a glycyl lysine isopeptide (Lys-Gly) (interchain with G-Cter in SUMO2) cross-link. Over residues 69–87 (QHGGGGGGGSGAAGGGGGE) the composition is skewed to gly residues. At Ser-98 the chain carries Phosphoserine. Positions 99–173 (PVVHIRGLID…HPAFVNYSTS (75 aa)) constitute an RRM 1 domain. Lys-133 participates in a covalent cross-link: Glycyl lysine isopeptide (Lys-Gly) (interchain with G-Cter in SUMO2). Ser-182 is subject to Phosphoserine. Residues 190–267 (SVLLFTILNP…CTLKIEYAKP (78 aa)) enclose the RRM 2 domain. N6-acetyllysine is present on Lys-266. Residues 281–298 (DYTNPNLSGQGDPGSNPN) show a composition bias toward polar residues. The tract at residues 281–413 (DYTNPNLSGQ…PPPPDYGPHA (133 aa)) is disordered. Phosphoserine is present on residues Ser-288 and Ser-295. Residue Lys-299 forms a Glycyl lysine isopeptide (Lys-Gly) (interchain with G-Cter in SUMO2) linkage. Asymmetric dimethylarginine occurs at positions 388 and 392. Residues 398–409 (GHPPPPPPPPDY) show a composition bias toward pro residues. Position 415 is a phosphoserine (Ser-415). RRM domains lie at 416–490 (PVLM…VSKQ) and 498–586 (SYGL…WDSK). Ser-578 carries the phosphoserine; by CaMK4 modification. A Glycyl lysine isopeptide (Lys-Gly) (interchain with G-Cter in SUMO2) cross-link involves residue Lys-602.

In terms of assembly, identified in a IGF2BP1-dependent mRNP granule complex containing untranslated mRNAs. Interacts with HNRNPLL. Interacts with APEX1; the interaction is DNA-dependent. Component of a complex with SETD2. Interacts with ELAVL1. Part of a transcription inhibitory ribonucleoprotein complex composed at least of the circular RNA circZNF827, ZNF827 and HNRNPK. Interacts with CHD8 in an RNA-dependent manner. In terms of processing, several isoelectric forms of the L protein are probably the results of post-translational modifications. Phosphorylation at Ser-578 by CaMK4 enhances interaction with a CaMK4-responsive RNA element (CaRRE1), and prevents inclusion of the stress axis-regulated exon (STREX) of the KCNMA1 potassium channel transcripts upon membrane depolarization.

The protein resides in the nucleus. Its subcellular location is the nucleoplasm. It localises to the cytoplasm. Functionally, splicing factor binding to exonic or intronic sites and acting as either an activator or repressor of exon inclusion. Exhibits a binding preference for CA-rich elements. Component of the heterogeneous nuclear ribonucleoprotein (hnRNP) complexes and associated with most nascent transcripts. Associates, together with APEX1, to the negative calcium responsive element (nCaRE) B2 of the APEX2 promoter. As part of a ribonucleoprotein complex composed at least of ZNF827, HNRNPK and the circular RNA circZNF827 that nucleates the complex on chromatin, may negatively regulate the transcription of genes involved in neuronal differentiation. Regulates alternative splicing of a core group of genes involved in neuronal differentiation, likely by mediating H3K36me3-coupled transcription elongation and co-transcriptional RNA processing via interaction with CHD8. The polypeptide is Heterogeneous nuclear ribonucleoprotein L (Rattus norvegicus (Rat)).